The primary structure comprises 81 residues: Short neurotoxin 1 (81 aa).

An N-terminal signal peptide occupies residues 1-21; it reads MKTLLLTLVVVTIVFLDLGYT. 4 cysteine pairs are disulfide-bonded: Cys24–Cys43, Cys38–Cys60, Cys62–Cys73, and Cys74–Cys79.

This sequence belongs to the three-finger toxin family. Short-chain subfamily. Type I alpha-neurotoxin sub-subfamily. In terms of tissue distribution, expressed by the venom gland.

Its subcellular location is the secreted. In terms of biological role, binds to muscle nicotinic acetylcholine receptor (nAChR) and inhibit acetylcholine from binding to the receptor, thereby impairing neuromuscular transmission. The chain is Short neurotoxin 1 from Notechis scutatus scutatus (Mainland tiger snake).